The sequence spans 1034 residues: N-acetyl-beta-glucosaminyl-glycoprotein 4-beta-N-acetylgalactosaminyltransferase 1 (1034 aa).

Topologically, residues 1-12 (MPWFPVKKVRKQ) are cytoplasmic. The helical; Signal-anchor for type II membrane protein transmembrane segment at 13 to 31 (MKLLLLLLLLTCAAWLTYV) threads the bilayer. Topologically, residues 32–1034 (HRSLVRPGRA…SRKGARAQRS (1003 aa)) are lumenal. A disordered region spans residues 51–104 (DGEKLTGVTDSRGVRVPSSTQRSEDSSESHEEEQAPEGRGPNMLFPGGPRKPPP). Positions 72 to 83 (RSEDSSESHEEE) are enriched in basic and acidic residues. The N-linked (GlcNAc...) asparagine glycan is linked to asparagine 106. A PA14 domain is found at 109–279 (HQTPPWREEF…LKFEIIDSAH (171 aa)). 2 disordered regions span residues 450–486 (PTDASVQQSHRTPTPAASTGTTASPTPPTTSPLDEQT) and 556–600 (RVQL…QLHG). The segment covering 461–473 (TPTPAASTGTTAS) has biased composition (low complexity). A glycan (N-linked (GlcNAc...) asparagine) is linked at asparagine 611. 2 disordered regions span residues 626–669 (SQVS…PLGR) and 782–801 (GDEDGESPEPPPAASIHPDS). A compositionally biased stretch (acidic residues) spans 636 to 661 (EGEEGEEDGAPGDEATSEDSEEEEEP).

This sequence belongs to the chondroitin N-acetylgalactosaminyltransferase family.

The protein resides in the golgi apparatus. It is found in the golgi stack membrane. It carries out the reaction an N-acetyl-beta-D-glucosaminyl derivative + UDP-N-acetyl-alpha-D-galactosamine = an N-acetyl-beta-D-galactosaminyl-(1-&gt;4)-N-acetyl-beta-D-glucosaminyl derivative + UDP + H(+). Its function is as follows. Transfers N-acetylgalactosamine (GalNAc) from UDP-GalNAc to N-acetylglucosamine-beta-benzyl with a beta-1,4-linkage to form N,N'-diacetyllactosediamine, GalNAc-beta-1,4-GlcNAc structures in N-linked glycans and probably O-linked glycans. The protein is N-acetyl-beta-glucosaminyl-glycoprotein 4-beta-N-acetylgalactosaminyltransferase 1 (B4galnt4) of Mus musculus (Mouse).